Reading from the N-terminus, the 203-residue chain is MSEILELEAESRTEFGTGAARALRRAGRVPAIIYGAGKTPVSISLEEKEITKYYRKPAFISQLINLTIDKKKYKVLPKAVELHPVTDIVRHVDFVFLEEKTQKMEVPVVYEGKERALGVKRGGYFNIVKRRVTLLCDVNNIPRNVTIDVTNMPMATSLKSSKIELPKGCSFVTKKEFVLATIIGRRGAKTEAEGEQQAAEAGK.

The protein belongs to the bacterial ribosomal protein bL25 family. CTC subfamily. In terms of assembly, part of the 50S ribosomal subunit; part of the 5S rRNA/L5/L18/L25 subcomplex. Contacts the 5S rRNA. Binds to the 5S rRNA independently of L5 and L18.

In terms of biological role, this is one of the proteins that binds to the 5S RNA in the ribosome where it forms part of the central protuberance. The polypeptide is Large ribosomal subunit protein bL25 (Rickettsia peacockii (strain Rustic)).